The sequence spans 528 residues: Glutamyl-tRNA(Gln) amidotransferase subunit B, mitochondrial (528 aa).

It belongs to the GatB/GatE family. GatB subfamily. Subunit of the heterotrimeric GatFAB amidotransferase (AdT) complex, composed of A, B and F subunits.

The protein resides in the mitochondrion. It carries out the reaction L-glutamyl-tRNA(Gln) + L-glutamine + ATP + H2O = L-glutaminyl-tRNA(Gln) + L-glutamate + ADP + phosphate + H(+). Functionally, allows the formation of correctly charged Gln-tRNA(Gln) through the transamidation of misacylated Glu-tRNA(Gln) in the mitochondria. The reaction takes place in the presence of glutamine and ATP through an activated gamma-phospho-Glu-tRNA(Gln). This chain is Glutamyl-tRNA(Gln) amidotransferase subunit B, mitochondrial, found in Clavispora lusitaniae (strain ATCC 42720) (Yeast).